Consider the following 352-residue polypeptide: Bifunctional protein FolD 1, mitochondrial (352 aa).

Residues 1-23 (MLMIARKALASAHTKAFRLATRD) constitute a mitochondrion transit peptide.

This sequence belongs to the tetrahydrofolate dehydrogenase/cyclohydrolase family. As to quaternary structure, homodimer.

Its subcellular location is the mitochondrion. It carries out the reaction (6R)-5,10-methylene-5,6,7,8-tetrahydrofolate + NADP(+) = (6R)-5,10-methenyltetrahydrofolate + NADPH. The catalysed reaction is (6R)-5,10-methenyltetrahydrofolate + H2O = (6R)-10-formyltetrahydrofolate + H(+). It participates in one-carbon metabolism; tetrahydrofolate interconversion. Functionally, catalyzes the oxidation of 5,10-methylenetetrahydrofolate to 5,10-methenyltetrahydrofolate and then the hydrolysis of 5,10-methenyltetrahydrofolate to 10-formyltetrahydrofolate. The chain is Bifunctional protein FolD 1, mitochondrial (FOLD1) from Arabidopsis thaliana (Mouse-ear cress).